A 430-amino-acid chain; its full sequence is Adenylosuccinate synthetase (430 aa).

Residues 12-18 (GDEGKGK) and 40-42 (GHT) contribute to the GTP site. The Proton acceptor role is filled by Asp-13. Residues Asp-13 and Gly-40 each contribute to the Mg(2+) site. IMP contacts are provided by residues 13–16 (DEGK), 38–41 (NAGH), Thr-129, Arg-143, Gln-224, Thr-239, and Arg-303. Catalysis depends on His-41, which acts as the Proton donor. Position 299-305 (299-305 (ATTGRRR)) interacts with substrate. GTP contacts are provided by residues Arg-305, 331-333 (KLD), and 413-415 (SVG).

It belongs to the adenylosuccinate synthetase family. As to quaternary structure, homodimer. Mg(2+) serves as cofactor.

Its subcellular location is the cytoplasm. The enzyme catalyses IMP + L-aspartate + GTP = N(6)-(1,2-dicarboxyethyl)-AMP + GDP + phosphate + 2 H(+). It functions in the pathway purine metabolism; AMP biosynthesis via de novo pathway; AMP from IMP: step 1/2. Its function is as follows. Plays an important role in the de novo pathway of purine nucleotide biosynthesis. Catalyzes the first committed step in the biosynthesis of AMP from IMP. The sequence is that of Adenylosuccinate synthetase from Desulfatibacillum aliphaticivorans.